Here is a 132-residue protein sequence, read N- to C-terminus: Translation initiation factor 5A (132 aa).

Hypusine is present on K36.

This sequence belongs to the eIF-5A family.

The protein localises to the cytoplasm. In terms of biological role, functions by promoting the formation of the first peptide bond. The sequence is that of Translation initiation factor 5A from Methanosphaera stadtmanae (strain ATCC 43021 / DSM 3091 / JCM 11832 / MCB-3).